A 329-amino-acid polypeptide reads, in one-letter code: 4-hydroxythreonine-4-phosphate dehydrogenase (329 aa).

Substrate contacts are provided by His-136 and Thr-137. Positions 166, 211, and 266 each coordinate a divalent metal cation. Positions 274, 283, and 292 each coordinate substrate.

It belongs to the PdxA family. Homodimer. Zn(2+) is required as a cofactor. Mg(2+) serves as cofactor. Requires Co(2+) as cofactor.

It localises to the cytoplasm. The catalysed reaction is 4-(phosphooxy)-L-threonine + NAD(+) = 3-amino-2-oxopropyl phosphate + CO2 + NADH. The protein operates within cofactor biosynthesis; pyridoxine 5'-phosphate biosynthesis; pyridoxine 5'-phosphate from D-erythrose 4-phosphate: step 4/5. Functionally, catalyzes the NAD(P)-dependent oxidation of 4-(phosphooxy)-L-threonine (HTP) into 2-amino-3-oxo-4-(phosphooxy)butyric acid which spontaneously decarboxylates to form 3-amino-2-oxopropyl phosphate (AHAP). In Neisseria meningitidis serogroup A / serotype 4A (strain DSM 15465 / Z2491), this protein is 4-hydroxythreonine-4-phosphate dehydrogenase.